The following is a 1622-amino-acid chain: Transient receptor potential cation channel subfamily M member 1 (1622 aa).

Disordered regions lie at residues 1-25 (MGSMRKMSSSFKRGSIKSSTSGSQK), 64-95 (PPLPSGAPSTTGEDTKQADTQSGKWSVSKHTQ), 450-490 (LAPP…EVEE), 618-641 (LGMEDDEPPAKGKKKKKKKKEEEI), and 822-856 (SKENEDGKEKEEENVDANADAGSRKGDEENEHKKQ). Topologically, residues 1 to 875 (MGSMRKMSSS…CEFYNAPIVK (875 aa)) are cytoplasmic. Low complexity predominate over residues 8 to 25 (SSSFKRGSIKSSTSGSQK). Positions 70–95 (APSTTGEDTKQADTQSGKWSVSKHTQ) are enriched in polar residues. Basic residues predominate over residues 472-483 (GRGKGKGKKKGK). Basic and acidic residues-rich tracts occupy residues 823–832 (KENEDGKEKE) and 843–853 (GSRKGDEENEH). The helical transmembrane segment at 876–896 (FWFYTISYLGYLLLFNYVILV) threads the bilayer. At 897 to 942 (RMDGWPSPQEWIVISYIVSLALEKIREILMSEPGKLSQKIKVWLQE) the chain is on the extracellular side. The chain crosses the membrane as a helical span at residues 943 to 963 (YWNITDLVAISMFMVGAILRL). Topologically, residues 964–973 (QSQPYMGYGR) are cytoplasmic. Residues 974–994 (VIYCVDIILWYIRVLDIFGVN) traverse the membrane as a helical segment. Residues 995–1006 (KYLGPYVMMIGK) are Extracellular-facing. Residues 1007 to 1027 (MMIDMLYFVVIMLVVLMSFGV) traverse the membrane as a helical segment. Residues 1028–1099 (ARQAILHPEE…CIPGAWLTPA (72 aa)) lie on the Cytoplasmic side of the membrane. Residues 1100–1120 (LMACYLLVANILLVNLLIAVF) form a helical membrane-spanning segment. N1121 carries N-linked (GlcNAc...) asparagine glycosylation. At 1121–1150 (NNTFFEVKSISNQVWKFQRYQLIMTFHDRP) the chain is on the extracellular side. The chain crosses the membrane as a helical span at residues 1151–1171 (VLPPPMIILSHIYIIIMRLSG). Topologically, residues 1172 to 1622 (RCRKKREGDQ…QEKRSAETEC (451 aa)) are cytoplasmic. Positions 1224–1252 (DERIRVTSERVENMSMRLEEINERENFMK) form a coiled coil. 3 disordered regions span residues 1354 to 1383 (EDAKSHLDQPSNLHHTPGPSPPATPGRSRL), 1389 to 1408 (LSTELRPGSDPGISAGEFDP), and 1567 to 1622 (CLRS…ETEC). A compositionally biased stretch (basic and acidic residues) spans 1613 to 1622 (QEKRSAETEC).

Belongs to the transient receptor (TC 1.A.4) family. LTrpC subfamily. TRPM1 sub-subfamily. In terms of assembly, homodimer. Interacts with TRPM3; the interaction results in the formation of a heteromultimeric cation channel complex that are functionally different from the homomeric channels. Interacts with GPR179. Associates with both guanine nucleotide-binding proteins G(o) and beta-gamma G protein dimer; implicated in directly regulating TRPM1 channel open-state. In terms of tissue distribution, expressed in the retina where it localizes on dendritic tips of ON bipolar cells. Specifically, it is expressed in retinal bipolar cells (BPCs) of the ON subtype. Not detected in brain, lung, liver, heart, kidney, spleen or small intestine. Also expressed at high levels in poorly metastatic variants of B16 melanoma and at much reduced levels in highly metastatic variants of B16 melanoma.

It localises to the cell membrane. The protein localises to the endoplasmic reticulum membrane. It is found in the cell projection. The protein resides in the axon. The enzyme catalyses Ca(2+)(in) = Ca(2+)(out). It carries out the reaction Mg(2+)(in) = Mg(2+)(out). The catalysed reaction is Mn(2+)(in) = Mn(2+)(out). It catalyses the reaction Ni(2+)(in) = Ni(2+)(out). Its activity is regulated as follows. Inhibited by extracellular zinc ions. Inhibited by intracellular Mg(2+). Activated by the neuroactive steroid pregnenolone sulfate. Negatively regulated by activation of GRM6 receptors in the ON-bipolar cells. In terms of biological role, constitutively open nonselective divalent cation-conducting channels which mediate the influx of Ca(2+), Mg(2+), Mn(2+), Ba(2+), and Ni(2+) into the cytoplasm, leading to membrane depolarization. Impermeable to zinc ions. In addition, forms heteromultimeric ion channels with TRPM3 which are permeable for calcium and zinc ions. Plays an essential role for the depolarizing photoresponse of retinal ON bipolar cells. In the dark, tonic release of glutamate activates the G-protein coupled receptor for glutamate (GRM6), its activation induces the release of G(o) and the beta-gamma G protein dimer. Both subunits can interact and inactivate the TRPM1 channel. A light onset, induces decrease in glutamate release and deactivation of GRM6 leading to channel opening and membrane depolarization. May play a role in metastasis suppression. The chain is Transient receptor potential cation channel subfamily M member 1 from Mus musculus (Mouse).